Here is a 198-residue protein sequence, read N- to C-terminus: tRNA (pseudouridine(54)-N(1))-methyltransferase (198 aa).

Residue Leu128 participates in S-adenosyl-L-methionine binding.

This sequence belongs to the methyltransferase superfamily. TrmY family. Homodimer.

It localises to the cytoplasm. The enzyme catalyses pseudouridine(54) in tRNA + S-adenosyl-L-methionine = N(1)-methylpseudouridine(54) in tRNA + S-adenosyl-L-homocysteine + H(+). Specifically catalyzes the N1-methylation of pseudouridine at position 54 (Psi54) in tRNAs. This is tRNA (pseudouridine(54)-N(1))-methyltransferase from Natronomonas pharaonis (strain ATCC 35678 / DSM 2160 / CIP 103997 / JCM 8858 / NBRC 14720 / NCIMB 2260 / Gabara) (Halobacterium pharaonis).